We begin with the raw amino-acid sequence, 283 residues long: Pantothenate synthetase (283 aa).

ATP is bound at residue 31–38; the sequence is MGALHDGH. Catalysis depends on His-38, which acts as the Proton donor. A (R)-pantoate-binding site is contributed by Gln-62. Gln-62 provides a ligand contact to beta-alanine. 148-151 contributes to the ATP binding site; the sequence is GKKD. Gln-154 is a binding site for (R)-pantoate. ATP contacts are provided by residues Ile-177 and 185–188; that span reads KSSR.

This sequence belongs to the pantothenate synthetase family. As to quaternary structure, homodimer.

The protein localises to the cytoplasm. It catalyses the reaction (R)-pantoate + beta-alanine + ATP = (R)-pantothenate + AMP + diphosphate + H(+). The protein operates within cofactor biosynthesis; (R)-pantothenate biosynthesis; (R)-pantothenate from (R)-pantoate and beta-alanine: step 1/1. Catalyzes the condensation of pantoate with beta-alanine in an ATP-dependent reaction via a pantoyl-adenylate intermediate. The polypeptide is Pantothenate synthetase (Oceanobacillus iheyensis (strain DSM 14371 / CIP 107618 / JCM 11309 / KCTC 3954 / HTE831)).